A 388-amino-acid chain; its full sequence is Fructose-bisphosphate aldolase, chloroplastic (388 aa).

Residues 1-38 (MASATLLKSSFLPKKSEWGATRQAAAPKPVTVSMVVRA) constitute a chloroplast transit peptide. Position 72 (Arg-72) interacts with substrate. The active-site Proton acceptor is the Glu-215. The active-site Schiff-base intermediate with dihydroxyacetone-P is Lys-257. Substrate-binding positions include 299-301 (SGG) and Arg-329.

The protein belongs to the class I fructose-bisphosphate aldolase family. In terms of assembly, homotetramer. In terms of tissue distribution, expressed in leaf mesophyll cells.

Its subcellular location is the plastid. It is found in the chloroplast. It localises to the plastoglobule. The catalysed reaction is beta-D-fructose 1,6-bisphosphate = D-glyceraldehyde 3-phosphate + dihydroxyacetone phosphate. It functions in the pathway carbohydrate degradation; glycolysis; D-glyceraldehyde 3-phosphate and glycerone phosphate from D-glucose: step 4/4. Plays a key role in glycolysis and gluconeogenesis. The polypeptide is Fructose-bisphosphate aldolase, chloroplastic (Oryza sativa subsp. japonica (Rice)).